The sequence spans 49 residues: uncharacterized protein (49 aa).

A helical membrane pass occupies residues 5–27; sequence ILEILSAFIRILFKLLYCWALFF.

It is found in the membrane. This is an uncharacterized protein from Saccharomyces cerevisiae (strain ATCC 204508 / S288c) (Baker's yeast).